The following is a 469-amino-acid chain: 3-isopropylmalate dehydratase large subunit (469 aa).

3 residues coordinate [4Fe-4S] cluster: Cys347, Cys408, and Cys411.

It belongs to the aconitase/IPM isomerase family. LeuC type 1 subfamily. Heterodimer of LeuC and LeuD. [4Fe-4S] cluster serves as cofactor.

It catalyses the reaction (2R,3S)-3-isopropylmalate = (2S)-2-isopropylmalate. It participates in amino-acid biosynthesis; L-leucine biosynthesis; L-leucine from 3-methyl-2-oxobutanoate: step 2/4. Functionally, catalyzes the isomerization between 2-isopropylmalate and 3-isopropylmalate, via the formation of 2-isopropylmaleate. The sequence is that of 3-isopropylmalate dehydratase large subunit from Actinobacillus succinogenes (strain ATCC 55618 / DSM 22257 / CCUG 43843 / 130Z).